Here is a 242-residue protein sequence, read N- to C-terminus: Probable pectate lyase D (242 aa).

The first 17 residues, 1–17, serve as a signal peptide directing secretion; it reads MYQKSLLFSLLASSALA. Residue N216 is glycosylated (N-linked (GlcNAc...) asparagine). A disordered region spans residues 217–242; sequence DTGAEPEEISEGPSDACQYSEPLSSC.

The protein belongs to the polysaccharide lyase 3 family. Ca(2+) serves as cofactor.

It is found in the secreted. It carries out the reaction Eliminative cleavage of (1-&gt;4)-alpha-D-galacturonan to give oligosaccharides with 4-deoxy-alpha-D-galact-4-enuronosyl groups at their non-reducing ends.. In terms of biological role, pectinolytic enzyme consist of four classes of enzymes: pectin lyase, polygalacturonase, pectin methylesterase and rhamnogalacturonase. Among pectinolytic enzymes, pectin lyase is the most important in depolymerization of pectin, since it cleaves internal glycosidic bonds of highly methylated pectins. Favors pectate, the anion, over pectin, the methyl ester. The chain is Probable pectate lyase D (plyD) from Aspergillus fumigatus (strain CBS 144.89 / FGSC A1163 / CEA10) (Neosartorya fumigata).